A 293-amino-acid chain; its full sequence is MPWIQLKLNTTGSQAEDLSDALVESGAVSVTFQDTHDNPVFEPLPGETLLWGDTDVIGLYDAETDMAEVVAMLEQHPLLGAGFRHKIEQLEDKDWEREWMDNFHPMRFGQRLWICPSWRDVPDPDAVNVMLDPGLAFGTGTHPTTALCLQWLDGLDLAGKTIIDFGCGSGILAIAALKLGAARAIGIDIDPQAIQASRDNAQRNGVSERLELYLPKDQPADLLADVVVANILAGPLRELAPLIGCLPKSGGHLGLSGVLATQAASVAQAYEDKFTLDPVAEREEWCRITGQRK.

Residues T145, G166, D188, and N230 each contribute to the S-adenosyl-L-methionine site.

It belongs to the methyltransferase superfamily. PrmA family.

It localises to the cytoplasm. The enzyme catalyses L-lysyl-[protein] + 3 S-adenosyl-L-methionine = N(6),N(6),N(6)-trimethyl-L-lysyl-[protein] + 3 S-adenosyl-L-homocysteine + 3 H(+). Functionally, methylates ribosomal protein L11. The protein is Ribosomal protein L11 methyltransferase of Serratia proteamaculans (strain 568).